The primary structure comprises 765 residues: Leucine-rich repeat and calponin homology domain-containing protein 2 (765 aa).

2 disordered regions span residues 1-39 (MAASQGGGGNSGGGGCGGGGSSGGCGTAGGGGGGAGGGG) and 55-76 (LFGQPFPNGPPWNPGSLQPQHT). 9 LRR repeats span residues 89–110 (SSGILSLSGRKLRDFPGSGYDL), 112–133 (DTTQADLSRNRFTEIPSDVWLF), 135–156 (PLETLNLYHNCIKTIPEAIKNL), 158–179 (MLTYLNISRNLLSTLPKYLFDL), 180–201 (PLKVLVVSNNKLVSIPEEIGKL), 203–224 (DLMELDISCNEIQVLPQQMGKL), 226–248 (SLRELNIRRNNLHVLPDELGDLP), 249–269 (LVKLDFSCNKVTEIPVCYRKL), and 271–292 (HLQVIILDNNPLQVPPAQICLK). The tract at residues 316 to 401 (LDLPSLSKRM…GSKTDSQKDQ (86 aa)) is disordered. Residues 378–388 (SNREQTSRNDS) are compositionally biased toward basic and acidic residues. A coiled-coil region spans residues 438-472 (SEKSRKNEELGDEKRLEKEQLLAEEEDDDLKEVTD). Disordered regions lie at residues 498 to 552 (RNKP…QSEE) and 565 to 628 (KYKS…EYGA). Over residues 503–512 (QTVECEKSVS) the composition is skewed to basic and acidic residues. Polar residues-rich tracts occupy residues 518-529 (SPLSPLTWQPLE) and 584-595 (DNANMSTQSPVS). One can recognise a Calponin-homology (CH) domain in the interval 642-755 (LREEREQIRQ…VTVQALLELP (114 aa)).

In terms of biological role, may play a role in the organization of the cytoskeleton. The sequence is that of Leucine-rich repeat and calponin homology domain-containing protein 2 (LRCH2) from Homo sapiens (Human).